Consider the following 143-residue polypeptide: Transcriptional regulator SlyA (143 aa).

Residues 2 to 135 enclose the HTH marR-type domain; sequence ESTLGSDLAR…LSGLIDKLER (134 aa). The H-T-H motif DNA-binding region spans 49-72; the sequence is QIQLAKAIGIEQPSLVRTLDQLEE.

It belongs to the SlyA family. Homodimer.

In terms of biological role, transcription regulator that can specifically activate or repress expression of target genes. The chain is Transcriptional regulator SlyA from Yersinia enterocolitica serotype O:8 / biotype 1B (strain NCTC 13174 / 8081).